The primary structure comprises 89 residues: Mitochondrial import inner membrane translocase subunit Tim9 (89 aa).

Ala2 carries the post-translational modification N-acetylalanine. The short motif at 28 to 52 (CFLDCVKDFTTREVKPEETTCSEHC) is the Twin CX3C motif element. Intrachain disulfides connect Cys28-Cys52 and Cys32-Cys48.

It belongs to the small Tim family. Heterohexamer; composed of 3 copies of TIMM9 and 3 copies of TIMM10/TIM10A, named soluble 70 kDa complex. The complex forms a 6-bladed alpha-propeller structure and associates with the TIMM22 component of the TIM22 complex. Interacts with multi-pass transmembrane proteins in transit. Also forms a complex composed of TIMM9, TIMM10/TIM10A and FXC1/TIM10B. Ubiquitous, with highest expression in heart, kidney, liver and skeletal muscle.

The protein resides in the mitochondrion inner membrane. Functionally, mitochondrial intermembrane chaperone that participates in the import and insertion of multi-pass transmembrane proteins into the mitochondrial inner membrane. May also be required for the transfer of beta-barrel precursors from the TOM complex to the sorting and assembly machinery (SAM complex) of the outer membrane. Acts as a chaperone-like protein that protects the hydrophobic precursors from aggregation and guide them through the mitochondrial intermembrane space. In Homo sapiens (Human), this protein is Mitochondrial import inner membrane translocase subunit Tim9 (TIMM9).